The primary structure comprises 790 residues: Solute carrier family 26 member 9 (790 aa).

The Cytoplasmic portion of the chain corresponds to 1 to 70 (MNQPRPRYVV…WLPKYKIKDY (70 aa)). Residues 71-96 (IIPDLLGGLSGGCIQVPQGMAFALLA) traverse the membrane as a helical segment. Topologically, residues 97–100 (NLPA) are extracellular. A helical transmembrane segment spans residues 101-109 (VNGLYSSFF). Residues 110–129 (PLLTYFFLGGIHQMVPGTFA) are Cytoplasmic-facing. The chain crosses the membrane as a helical span at residues 130 to 142 (VISILVGNICLQL). The Extracellular segment spans residues 143-162 (APESKFQIFNNVTNETYVDT). A helical transmembrane segment spans residues 163 to 191 (AAMEAERLHVSATLACLTAVIQMALGFMQ). Over 192–201 (FGFVAIYLSE) the chain is Cytoplasmic. The chain crosses the membrane as a helical span at residues 202–224 (SFIRGFMTAAGLQILISVLKYIF). Residues 225-237 (GLTIPSYTGPGSI) are Extracellular-facing. An intramembrane region (helical) is located at residues 238–246 (VFTFIDICK). The Extracellular segment spans residues 247–254 (NLPHTNIA). The helical transmembrane segment at 255–275 (SLIFALVSGVFLVLVKELNAR) threads the bilayer. Residues 276-286 (YMHKIHFPIPT) are Cytoplasmic-facing. A helical membrane pass occupies residues 287–299 (EMIVVVVATAISG). The Extracellular portion of the chain corresponds to 300 to 334 (SCKMPKKYHMQIVGEIRQGFPTPVAPMVSQWKGMV). A helical transmembrane segment spans residues 335 to 358 (GTAFSLAIVGYVINLAMGRTLASK). Topologically, residues 359-365 (HGYDVDS) are cytoplasmic. The helical transmembrane segment at 366–379 (NQEMIALGCSNFFG) threads the bilayer. At 380 to 390 (SFFKIHVICCA) the chain is on the extracellular side. The chain crosses the membrane as a helical span at residues 391–400 (LSVTLAVDGA). The Cytoplasmic portion of the chain corresponds to 401–405 (GGKSQ). A helical transmembrane segment spans residues 406 to 419 (VASLCVSLVVMITM). At 420–431 (LVLGSYLYPLPK) the chain is on the extracellular side. Residues 432–457 (AVLGALIAVNLKNSLKQLTDPYYLWR) traverse the membrane as a helical segment. Residues 458-461 (KSKL) are Cytoplasmic-facing. The helical transmembrane segment at 462–476 (DCCVWVVSFLSSFFL) threads the bilayer. Residues 477–479 (SLP) are Extracellular-facing. The helical transmembrane segment at 480 to 498 (YGVAVGVAFSILVVIFQTQ) threads the bilayer. Residues 499–790 (FRNGSTLAQV…MFHTETLTAL (292 aa)) lie on the Cytoplasmic side of the membrane. The STAS domain maps to 519-737 (TYNRAQEIAG…PSIHDAVLFA (219 aa)).

This sequence belongs to the SLC26A/SulP transporter (TC 2.A.53) family. In terms of assembly, homodimer. Expressed in stomach and trachea. Abundantly expressed in the apical domain of the surface epithelial cells and the deep cells in the gastric gland. Also expressed in heart, brain, lung and liver.

It is found in the cell membrane. The protein localises to the endomembrane system. The catalysed reaction is chloride(in) = chloride(out). It carries out the reaction hydrogencarbonate(in) + chloride(out) = hydrogencarbonate(out) + chloride(in). Its activity is regulated as follows. Inhibited by ammonium and thiosulfate. Functionally, ion transporter that can act both as an ion channel and anion exchanger. Mainly acts as a chloride channel, which mediate uncoupled chloride anion transport in an alternate-access mechanism where a saturable binding site is alternately exposed to either one or the other side of the membrane. Also acts as a DIDS- and thiosulfate- sensitive anion exchanger the exchange of chloride for bicarbonate ions across the cell membrane. In Mus musculus (Mouse), this protein is Solute carrier family 26 member 9.